The chain runs to 205 residues: GTP cyclohydrolase-2 (205 aa).

49–53 (RLHSE) is a binding site for GTP. Zn(2+) is bound by residues C54, C65, and C67. Residues Q70, 92-94 (EGR), and T114 contribute to the GTP site. Catalysis depends on D126, which acts as the Proton acceptor. The active-site Nucleophile is the R128. The GTP site is built by T149 and K154.

It belongs to the GTP cyclohydrolase II family. The cofactor is Zn(2+).

The catalysed reaction is GTP + 4 H2O = 2,5-diamino-6-hydroxy-4-(5-phosphoribosylamino)-pyrimidine + formate + 2 phosphate + 3 H(+). It participates in cofactor biosynthesis; riboflavin biosynthesis; 5-amino-6-(D-ribitylamino)uracil from GTP: step 1/4. Its function is as follows. Catalyzes the conversion of GTP to 2,5-diamino-6-ribosylamino-4(3H)-pyrimidinone 5'-phosphate (DARP), formate and pyrophosphate. The polypeptide is GTP cyclohydrolase-2 (Pseudomonas paraeruginosa (strain DSM 24068 / PA7) (Pseudomonas aeruginosa (strain PA7))).